The sequence spans 408 residues: Dual-specificity RNA methyltransferase RlmN (408 aa).

Catalysis depends on glutamate 122, which acts as the Proton acceptor. In terms of domain architecture, Radical SAM core spans 128–369 (EEDRGTLCIS…NRAGYASPIR (242 aa)). Cysteine 135 and cysteine 380 are disulfide-bonded. [4Fe-4S] cluster contacts are provided by cysteine 142, cysteine 146, and cysteine 149. S-adenosyl-L-methionine-binding positions include 206–207 (GE), serine 238, 260–262 (SLH), and asparagine 337. The active-site S-methylcysteine intermediate is the cysteine 380.

It belongs to the radical SAM superfamily. RlmN family. [4Fe-4S] cluster is required as a cofactor.

It localises to the cytoplasm. It catalyses the reaction adenosine(2503) in 23S rRNA + 2 reduced [2Fe-2S]-[ferredoxin] + 2 S-adenosyl-L-methionine = 2-methyladenosine(2503) in 23S rRNA + 5'-deoxyadenosine + L-methionine + 2 oxidized [2Fe-2S]-[ferredoxin] + S-adenosyl-L-homocysteine. The enzyme catalyses adenosine(37) in tRNA + 2 reduced [2Fe-2S]-[ferredoxin] + 2 S-adenosyl-L-methionine = 2-methyladenosine(37) in tRNA + 5'-deoxyadenosine + L-methionine + 2 oxidized [2Fe-2S]-[ferredoxin] + S-adenosyl-L-homocysteine. Specifically methylates position 2 of adenine 2503 in 23S rRNA and position 2 of adenine 37 in tRNAs. m2A2503 modification seems to play a crucial role in the proofreading step occurring at the peptidyl transferase center and thus would serve to optimize ribosomal fidelity. The sequence is that of Dual-specificity RNA methyltransferase RlmN from Chelativorans sp. (strain BNC1).